The sequence spans 268 residues: Ribosomal RNA small subunit methyltransferase A (268 aa).

6 residues coordinate S-adenosyl-L-methionine: N18, L20, G45, E66, D91, and N112.

It belongs to the class I-like SAM-binding methyltransferase superfamily. rRNA adenine N(6)-methyltransferase family. RsmA subfamily.

It localises to the cytoplasm. The enzyme catalyses adenosine(1518)/adenosine(1519) in 16S rRNA + 4 S-adenosyl-L-methionine = N(6)-dimethyladenosine(1518)/N(6)-dimethyladenosine(1519) in 16S rRNA + 4 S-adenosyl-L-homocysteine + 4 H(+). Specifically dimethylates two adjacent adenosines (A1518 and A1519) in the loop of a conserved hairpin near the 3'-end of 16S rRNA in the 30S particle. May play a critical role in biogenesis of 30S subunits. This is Ribosomal RNA small subunit methyltransferase A from Shewanella baltica (strain OS223).